Here is a 388-residue protein sequence, read N- to C-terminus: Protein phosphatase 2C 57 (388 aa).

In terms of domain architecture, PPM-type phosphatase spans 59-348; sequence RWGYTSVQGF…DNISIIIADL (290 aa). Asp-93, Gly-94, Asp-296, and Asp-339 together coordinate Mn(2+). A helical membrane pass occupies residues 363–383; that stretch reads VVVELVQAATTIGLVTVGIWM.

It belongs to the PP2C family. Mg(2+) serves as cofactor. Mn(2+) is required as a cofactor.

It is found in the membrane. It localises to the plastid. Its subcellular location is the chloroplast stroma. The enzyme catalyses O-phospho-L-seryl-[protein] + H2O = L-seryl-[protein] + phosphate. It carries out the reaction O-phospho-L-threonyl-[protein] + H2O = L-threonyl-[protein] + phosphate. In terms of biological role, protein phosphatase specifically required for efficient dephosphorylation of the light-harvesting complex II outer antennae (LCHII) and transition from state 2 to state 1. State transition plays a central role in response to environmental changes and allows to adjust to changing light conditions via the redistribution of light excitation energy between photosystem II (PSII) and photosystem I (PSI) in a short time by relocating LHCII proteins. Mainly responsible for the dephosphorylation of Lhcb1 and Lhcb2 but not of the photosystem II core proteins. In Arabidopsis thaliana (Mouse-ear cress), this protein is Protein phosphatase 2C 57.